The following is a 388-amino-acid chain: Na(+)/H(+) antiporter NhaA (388 aa).

The Cytoplasmic segment spans residues Met-1–Asp-11. Residues Ala-12–Ser-31 form a helical membrane-spanning segment. At Gly-32 to Asn-58 the chain is on the periplasmic side. The helical transmembrane segment at Met-59 to Lys-80 threads the bilayer. Residues Arg-81 to Phe-96 are Cytoplasmic-facing. Residues Pro-97–Asn-116 traverse the membrane as a helical segment. Residues Tyr-117–Thr-122 lie on the Periplasmic side of the membrane. The chain crosses the membrane as a helical span at residues Arg-123–Ala-130. Residues Ala-131 to Ile-154 lie on the Cytoplasmic side of the membrane. Residues Phe-155 to Thr-176 traverse the membrane as a helical segment. Residues Asn-177 to Ser-180 lie on the Periplasmic side of the membrane. Residues Met-181 to Cys-200 traverse the membrane as a helical segment. Over Gly-201 to Arg-204 the chain is Cytoplasmic. The chain crosses the membrane as a helical span at residues Thr-205–Ser-222. A topological domain (periplasmic) is located at residue Gly-223. The helical transmembrane segment at Val-224–Phe-236 threads the bilayer. Topologically, residues Ile-237–His-253 are cytoplasmic. Residues Val-254–Ala-272 form a helical membrane-spanning segment. Over Gly-273–Ser-286 the chain is Periplasmic. Residues Ile-287 to Leu-310 traverse the membrane as a helical segment. The Cytoplasmic portion of the chain corresponds to Ala-311–Phe-339. The chain crosses the membrane as a helical span at residues Thr-340 to Phe-350. The Periplasmic portion of the chain corresponds to Gly-351–Leu-357. A helical membrane pass occupies residues Ile-358–Leu-380. At Arg-381 to Val-388 the chain is on the cytoplasmic side.

Belongs to the NhaA Na(+)/H(+) (TC 2.A.33) antiporter family.

The protein localises to the cell inner membrane. It catalyses the reaction Na(+)(in) + 2 H(+)(out) = Na(+)(out) + 2 H(+)(in). Its function is as follows. Na(+)/H(+) antiporter that extrudes sodium in exchange for external protons. This chain is Na(+)/H(+) antiporter NhaA, found in Shigella dysenteriae serotype 1 (strain Sd197).